The sequence spans 187 residues: Phospholipase A2-gamma (187 aa).

Positions 1–25 (MITGLALSRVAFGLTAFLLLAVVSS) are cleaved as a signal peptide. 6 disulfides stabilise this stretch: C29-C56, C33-C62, C38-C115, C49-C69, C68-C93, and C75-C86. Residues Y48, G50, and Y53 each contribute to the Ca(2+) site. H72 is an active-site residue. Residue D73 coordinates Ca(2+).

This sequence belongs to the phospholipase A2 family. Ca(2+) serves as cofactor. Strongly expressed in mature flowers but weakly expressed in other tissues. Detected in buds, open flowers and in pollen.

It localises to the secreted. The protein resides in the golgi apparatus. The protein localises to the trans-Golgi network. Its subcellular location is the endoplasmic reticulum. It catalyses the reaction a 1,2-diacyl-sn-glycero-3-phosphocholine + H2O = a 1-acyl-sn-glycero-3-phosphocholine + a fatty acid + H(+). PA2 catalyzes the calcium-dependent hydrolysis of the 2-acyl groups in 3-sn-phosphoglycerides. Releases lysophospholipids (LPLs) and free fatty acids (FFAs) from membrane phospholipids in response to hormones and other external stimuli. Plays a role in pollen development and germination and tube growth. This is Phospholipase A2-gamma (PLA2-GAMMA) from Arabidopsis thaliana (Mouse-ear cress).